Consider the following 209-residue polypeptide: Large ribosomal subunit protein uL3 (209 aa).

The segment at 127–164 (NFSGGQRTHGQSDRLRAPGSVGGASDPSRTFKGTKMGG) is disordered.

This sequence belongs to the universal ribosomal protein uL3 family. As to quaternary structure, part of the 50S ribosomal subunit. Forms a cluster with proteins L14 and L19.

One of the primary rRNA binding proteins, it binds directly near the 3'-end of the 23S rRNA, where it nucleates assembly of the 50S subunit. In Chlorobium phaeobacteroides (strain BS1), this protein is Large ribosomal subunit protein uL3.